The sequence spans 195 residues: SXP/RAL-2-like protein 2 (195 aa).

The disordered stretch occupies residues 162–195; that stretch reads EKVHGGSHGGLRGGPGGPRDGPRGGPRGGPRGGR. Gly residues predominate over residues 167-195; that stretch reads GSHGGLRGGPGGPRDGPRGGPRGGPRGGR.

The protein belongs to the SXP/RAL-2 family.

The chain is SXP/RAL-2-like protein 2 from Caenorhabditis elegans.